A 637-amino-acid chain; its full sequence is Biosynthetic arginine decarboxylase (637 aa).

Position 101 is an N6-(pyridoxal phosphate)lysine (K101). Residue 286–296 (FDVGGGLAVDY) participates in substrate binding.

Belongs to the Orn/Lys/Arg decarboxylase class-II family. SpeA subfamily. The cofactor is Mg(2+). Requires pyridoxal 5'-phosphate as cofactor.

The enzyme catalyses L-arginine + H(+) = agmatine + CO2. It functions in the pathway amine and polyamine biosynthesis; agmatine biosynthesis; agmatine from L-arginine: step 1/1. In terms of biological role, catalyzes the biosynthesis of agmatine from arginine. The protein is Biosynthetic arginine decarboxylase of Shewanella baltica (strain OS195).